Here is a 154-residue protein sequence, read N- to C-terminus: AP-1 complex subunit sigma-2 (154 aa).

The protein belongs to the adaptor complexes small subunit family. As to quaternary structure, adaptor protein complex 1 (AP-1) is a heterotetramer composed of two large adaptins (gamma-type subunit and beta-type subunit), a medium adaptin (mu-type subunit) and a small adaptin (sigma-type subunit).

It localises to the golgi apparatus. The protein localises to the trans-Golgi network. Its subcellular location is the cytoplasmic vesicle. The protein resides in the clathrin-coated vesicle membrane. Functionally, subunit of clathrin-associated adaptor protein complex 1 that plays a role in protein sorting in the trans-Golgi network (TGN) and endosomes. The AP complexes mediate the recruitment of clathrin to membranes and the recognition of sorting signals within the cytosolic tails of transmembrane cargo molecules. Also involved in early steps of phagocytosis and macropinocytosis. This Dictyostelium discoideum (Social amoeba) protein is AP-1 complex subunit sigma-2 (ap1s2).